The following is a 2118-amino-acid chain: Separin (2118 aa).

A Phosphoserine modification is found at Ser-1121. Residues 1309-1318 (KCSGRGRRRI) show a composition bias toward basic residues. The tract at residues 1309–1352 (KCSGRGRRRIASVPPPLHNSSQKGLEEEGPPCTPKPPGRARQAG) is disordered. A phosphoserine mark is found at Ser-1391 and Ser-1394. Positions 1408-1428 (EEPKRRGTASRTRGQTRKGRS) are disordered. The residue at position 1504 (Ser-1504) is a Phosphoserine. A Peptidase C50 domain is found at 1941 to 2036 (PQNTFYVLNP…SAALAVHGNL (96 aa)). Cys-2025 is an active-site residue.

As to quaternary structure, interacts with PTTG1. Interacts with RAD21. Post-translationally, autocleaves. This function, which is not essential for its protease activity, is unknown. Phosphorylated by CDK1. There is 8 Ser/Thr phosphorylation sites. Among them, only Ser-1121 phosphorylation is the major site, which conducts to the enzyme inactivation.

Its subcellular location is the cytoplasm. It is found in the nucleus. The enzyme catalyses All bonds known to be hydrolyzed by this endopeptidase have arginine in P1 and an acidic residue in P4. P6 is often occupied by an acidic residue or by a hydroxy-amino-acid residue, the phosphorylation of which enhances cleavage.. Its activity is regulated as follows. Regulated by at least two independent mechanisms. First, it is inactivated via its interaction with securin/PTTG1, which probably covers its active site. The association with PTTG1 is not only inhibitory, since PTTG1 is also required for activating it, the enzyme being inactive in cells in which PTTG1 is absent. PTTG1 degradation at anaphase, liberates it and triggers RAD21 cleavage. Second, phosphorylation at Ser-1121 inactivates it. The complete phosphorylation during mitosis, is removed when cells undergo anaphase. Activation of the enzyme at the metaphase-anaphase transition probably requires the removal of both securin and inhibitory phosphate. Caspase-like protease, which plays a central role in the chromosome segregation by cleaving the SCC1/RAD21 subunit of the cohesin complex at the onset of anaphase. During most of the cell cycle, it is inactivated by different mechanisms. This is Separin (Espl1) from Mus musculus (Mouse).